Consider the following 638-residue polypeptide: Lactose permease (638 aa).

A permease region spans residues 1-470 (MHNHKVSGKQ…AQVIEELKSK (470 aa)). The next 12 helical transmembrane spans lie at 27–47 (FYGVMSTYFIIFITSGMFSGL), 56–76 (IGLITGLMVLVRIIELVIDPI), 94–114 (WILIGTVVSAALLLILFTGIF), 121–141 (WILFAILFVLIYIAFDVFYSL), 166–186 (LGAFSGIIGWNSLPIIVVPLV), 204–224 (WFAFAAVISALAIICALIVCF), 261–281 (LAYLLYSLAAVITNGVLFYMY), 291–311 (FWVVGIIATIIGCCINPSFPV), 320–340 (WLFIAGQTCMVLAYVLFIFGH), 343–363 (VFLMDLGLVLFNINFALLVTV), 395–415 (FAGAVSNALVGYVAIAAGMTG), and 429–449 (TFNMMALYIPLALAVLSIVVF). Residues 503–610 (SSVVDEDGKP…KDTIVIFYTQ (108 aa)) form the PTS EIIA type-1 domain. Histidine 558 carries the phosphohistidine; by HPr modification.

It in the N-terminal section; belongs to the sodium:galactoside symporter (TC 2.A.2) family.

Its subcellular location is the cell membrane. Responsible for transport of beta-galactosides into the cell, with the concomitant uptake of protons (symport system), and also for transport of homologous and heterologous exchange of beta-galactosides. This is Lactose permease (lacS) from Lactobacillus helveticus (Lactobacillus suntoryeus).